The primary structure comprises 644 residues: Exoribonuclease 2 (644 aa).

In terms of domain architecture, RNB spans 189 to 516 (REDLTALDFV…NHRLLKAVIK (328 aa)). In terms of domain architecture, S1 motif spans 561–643 (DTRFAAEIVD…ETRSIIARPV (83 aa)).

This sequence belongs to the RNR ribonuclease family. RNase II subfamily.

Its subcellular location is the cytoplasm. It catalyses the reaction Exonucleolytic cleavage in the 3'- to 5'-direction to yield nucleoside 5'-phosphates.. Functionally, involved in mRNA degradation. Hydrolyzes single-stranded polyribonucleotides processively in the 3' to 5' direction. The polypeptide is Exoribonuclease 2 (Shigella boydii serotype 18 (strain CDC 3083-94 / BS512)).